The sequence spans 1378 residues: MADDHKLCGFLCTVLSVDSPDLLQSGSSCFIFNDGSVTGFKSENGLILSLTNPISNLQSLISSKGDHDVENSGTIEDGRLETPQKRRKCVEGESSGKRKTPKSKRRVLSGSKEKTVQGRKRVKSIGMVNGSISVVQQLHALVANKCLKIICRVVKVDKGENGEERAVVLVDVYLPIELWSGWQFPKSQATAAALFKHLSCDWGLRVSILDGKSIWEEANGRIKAIWDLSDCHVFDCKLLCNAPNSPKRRLFKLHEIFKSLPSPGNHDVSYSSRVLPSTDSCVSGVWDLSDDVLISILMKLDTKDLFSIAAVCRLFRSLTSLIVPCMNLKLFPHQQAAVGWMLERERKAEVSSHPLYLSFDTEDGFSFYVNAVTGDIITEAAPMVKDFRGGMFCDEPGLGKTITALSLILKTQGTMADPPEGLPIVWCTHKSDKKCAYYEYTSDQFTSNSMSAVKRFQSPSSCRNQVSFEAFRPLLESKSLPFKQARLMDPDDQTLESKNSNFENEFETHIPASLDLKAQCRKSLGNVRKNLLPAYNGASELSEVMEAKRISNWKKCGMITGCKRKGLTDSDVESDIWMQCDSCSKWRRIIDEGVSVTGSAWFCSNNNDPAYQSCNDPEELWDKSQPIKYLQGFYTKGASGEESDNISFFTSVLREHKSSVSSTVKKALIWLAKLPLEKLSQMETVGLPGPVLGLKLDALGFQRIFRAFGLKSRVEKGVTKWFYPKFLENLVFDVPALKVALCQPLDTFRLYLSKATLIVVPTNLVNHWLTQIQKHVCSDQLRILVWADHIELSPHSLAWDYDVVITTFSRLSAEWNPRKKSPLIQVHWLRVMLDEGHTLGSSVSLTNKFQMAVSLTACNRWLLTGTPTPNTPNSQLSHIQPLLKFLHEEVYGENPKFWEAGILRPFEAEMEEGRLRLLQLLQRCMISSRKKDLQMIPPCIKKVTYLNFLPGHARSYNELVETVRRNILLADWNDPSHVESLLNSKQWKFRSITISNVRLSCCVAGHIKMTDAGHDIKETMDALLENDLDLWTEEYSFIQDSLIGGCNCKRCGEWCRLPVITPCRHLLCLDCVALDSERCTISGCGYLYEMQTPETLARPENPNPKWPVPKDLIELQPSYKQDDWNPDWQSTSSSKVSYLVDRLRKLHEGNKKSILSFNKTDNDNLEDNPPGTSEAFLGKELHGQDCGSQMVFVDKVLIFSQFLEHIHVIEQQLTTAGIKFGKMYSPMQSYNKMKALAMFQNDADCMALLMDGSGALGLDLSFVTHVFLMEPIWDKSLEEQVISRAHRMGAKRPIFVETLTMRGTIEEQMMRFLEDAEKSDRLLSGDYIEAKQETTRSRRTLHDLVESNYLSHLSFVRSDGKMEFAASQLAGLKDHQLA.

Residues 65-96 are compositionally biased toward basic and acidic residues; it reads GDHDVENSGTIEDGRLETPQKRRKCVEGESSG. Residues 65–113 are disordered; it reads GDHDVENSGTIEDGRLETPQKRRKCVEGESSGKRKTPKSKRRVLSGSKE. Basic residues predominate over residues 97–107; the sequence is KRKTPKSKRRV. In terms of domain architecture, F-box spans 282 to 328; it reads VSGVWDLSDDVLISILMKLDTKDLFSIAAVCRLFRSLTSLIVPCMNL. Residues 571–622 form a CW-type zinc finger; sequence DVESDIWMQCDSCSKWRRIIDEGVSVTGSAWFCSNNNDPAYQSCNDPEELWD. Cys580, Cys583, Cys603, and Cys614 together coordinate Zn(2+). The 166-residue stretch at 720–885 folds into the Helicase ATP-binding domain; the sequence is KWFYPKFLEN…LSHIQPLLKF (166 aa). Residue 733 to 740 coordinates ATP; the sequence is DVPALKVA. The DEAH box motif lies at 834 to 837; sequence DEGH. The 140-residue stretch at 1185–1324 folds into the Helicase C-terminal domain; that stretch reads DCGSQMVFVD…DAEKSDRLLS (140 aa).

Belongs to the helicase family.

The protein is F-box protein At3g54460 of Arabidopsis thaliana (Mouse-ear cress).